Reading from the N-terminus, the 931-residue chain is MTTGFLQKIFGSRNQRLVKQYQKTVETINALETQIEQLTDDQLRGKTDEFRQRVAAGESLDKLLPEAFAVCREASRRVLKMRHFDVQLIGGMVLHYGKIAEMRTGEGKTLVATLPVYLNALAGRGVHVVTVNDYLAQRDAEWMARLYNFLGLSVGINLSGMEHEQKQQAYASDITYGTNNEFGFDYLRDNMVYETEARVQRALNFAVVDEVDSILIDEARTPLIISGQAEDHTELYVRMNALPPLLERQIGEEKADGTGVEKPGDYTLDEKSRQVFLTESGHEKAERLLAEWGLIGEGESLYAPQNITLMHHVYAALRAHTLFYKDQHYVVQNGEVVIVDEFTGRLMAGRRWSDGLHQAVEAKEHVKIQSENQTLASITFQNYFRMYAKLAGMTGTADTEAYEFNEIYGLETVVIPTNRPPKRIDKQDQIYKTAKERYDAVIRDIRECYERGQPVLVGTTSIENSELLSHLLKQAGLPHEVLNAKQHEREAAIVAEAGRPKRITIATNMAGRGTDIVLGGNAEKQAAFIEADEAIPADEKARRIKQLHDEWETLHEQVKAAGGLHIIGTERHESRRIDNQLRGRAGRQGDPGSSRFYLSLDDPLLRIFAGDRVRSIMDRLKMPEGEAIEAGIVTRSIESAQRKVEARNFDIRKQLLEYDDVSNDQRKVIYQQRNELLEAHDITETISAMRHGVITEVVRQFVPEGSIEEQWDVPELEEALRNDWQLDLAIQEMVNESSSITADEILDAVTTAADEQYEAKVAMVGRESFSAFERSVMLQTVDRLWREHLAALDHLRQGIHLRGYAQKNPKQEYKREAFELFAAMLDAIKQEVTRIVMNVQIQSPEQLEEAAEQIEERSGHLENVEYQHADYAESGAPVANVAAATAATATADMVGSAMTHGHGGELPKVGRNDPCPCGSGKKYKQCHGKLS.

Residues Gln87, 105–109 (GEGKT), and Asp515 each bind ATP. Residues Cys915, Cys917, Cys926, and His927 each coordinate Zn(2+).

The protein belongs to the SecA family. In terms of assembly, monomer and homodimer. Part of the essential Sec protein translocation apparatus which comprises SecA, SecYEG and auxiliary proteins SecDF-YajC and YidC. The cofactor is Zn(2+).

It is found in the cell inner membrane. It localises to the cytoplasm. It carries out the reaction ATP + H2O + cellular proteinSide 1 = ADP + phosphate + cellular proteinSide 2.. Its function is as follows. Part of the Sec protein translocase complex. Interacts with the SecYEG preprotein conducting channel. Has a central role in coupling the hydrolysis of ATP to the transfer of proteins into and across the cell membrane, serving both as a receptor for the preprotein-SecB complex and as an ATP-driven molecular motor driving the stepwise translocation of polypeptide chains across the membrane. This chain is Protein translocase subunit SecA, found in Burkholderia ambifaria (strain MC40-6).